Here is a 569-residue protein sequence, read N- to C-terminus: Acyl-CoA transferase FVEG_12629 (569 aa).

This sequence belongs to the CoA-transferase III family.

Its function is as follows. Acyl-CoA transferase; part of the Fusarium detoxification of benzoxazolinone cluster 2 (FDB2) involved in the degradation of benzoxazolinones produced by the host plant. Maize, wheat, and rye produce the 2 benzoxazinone phytoanticipins 2,4-dihy-droxy-7-methoxy-1,4-benzoxazin-3-one (DIMBOA) and 2,4-dihydroxy-1,4-benzoxazin-3-one (DIBOA) that, due to their inherent instability once released, spontaneously degrade to the more stable corresponding benzoxazolinones, 6-methoxy-2-benzoxazolinone (MBOA) and 2-benzoxazolinone (BOA), respectively. The first step in the detoxification of benzoxazolinones involves the hydrolysis of the cyclic ester bond of benzoxazolinones by the FDB1 cluster gamma-lactamase MBL1 to aminophenols. MBL1 is able to convert BOA into 2-aminophenol (2-AP), as well as MBOA into 5-methoxy-2-aminophenol (2-AMP). The FDB2 cluster N-malonyltransferase FDB2/NAT1 then metabolizes aminophenols via N-malonylation to non-toxic malonamic acids. FDB2/NAT1 converts 2-AP into N-(2-hydroxyphenyl) malonamic acid (HPMA) and 2-AMP into N-(2-hydroxy-4-methoxyphenyl) malonamic acid (HMPMA). The duplicated dienlactone hydrolases DLH1 and DLH2 may provide redundant function for hydrolyzing the lactone moiety in the BOA molecule. The roles of the amidases an other enzymes encoded by the 2 FDB clusters have not been identified so far. The chain is Acyl-CoA transferase FVEG_12629 from Gibberella moniliformis (strain M3125 / FGSC 7600) (Maize ear and stalk rot fungus).